We begin with the raw amino-acid sequence, 196 residues long: Peptide deformylase (196 aa).

Fe cation-binding residues include Cys105 and His147. The active site involves Glu148. His151 contributes to the Fe cation binding site.

This sequence belongs to the polypeptide deformylase family. Requires Fe(2+) as cofactor.

The enzyme catalyses N-terminal N-formyl-L-methionyl-[peptide] + H2O = N-terminal L-methionyl-[peptide] + formate. In terms of biological role, removes the formyl group from the N-terminal Met of newly synthesized proteins. Requires at least a dipeptide for an efficient rate of reaction. N-terminal L-methionine is a prerequisite for activity but the enzyme has broad specificity at other positions. The protein is Peptide deformylase of Flavobacterium johnsoniae (strain ATCC 17061 / DSM 2064 / JCM 8514 / BCRC 14874 / CCUG 350202 / NBRC 14942 / NCIMB 11054 / UW101) (Cytophaga johnsonae).